We begin with the raw amino-acid sequence, 417 residues long: Gamma-glutamyl phosphate reductase (417 aa).

This sequence belongs to the gamma-glutamyl phosphate reductase family.

The protein resides in the cytoplasm. It carries out the reaction L-glutamate 5-semialdehyde + phosphate + NADP(+) = L-glutamyl 5-phosphate + NADPH + H(+). Its pathway is amino-acid biosynthesis; L-proline biosynthesis; L-glutamate 5-semialdehyde from L-glutamate: step 2/2. Its function is as follows. Catalyzes the NADPH-dependent reduction of L-glutamate 5-phosphate into L-glutamate 5-semialdehyde and phosphate. The product spontaneously undergoes cyclization to form 1-pyrroline-5-carboxylate. In Enterobacter sp. (strain 638), this protein is Gamma-glutamyl phosphate reductase.